A 176-amino-acid chain; its full sequence is Lipoprotein signal peptidase (176 aa).

Helical transmembrane passes span 11-31, 38-58, 76-96, and 101-121; these read AFVA…LDQL, ATMQ…VLVF, WFFT…MHQH, and LLPA…VDRL. Active-site residues include Asp-128 and Asp-146. A helical membrane pass occupies residues 139-159; sequence WPAFNLADSAITLGVGLMLWA.

This sequence belongs to the peptidase A8 family.

It is found in the cell inner membrane. It carries out the reaction Release of signal peptides from bacterial membrane prolipoproteins. Hydrolyzes -Xaa-Yaa-Zaa-|-(S,diacylglyceryl)Cys-, in which Xaa is hydrophobic (preferably Leu), and Yaa (Ala or Ser) and Zaa (Gly or Ala) have small, neutral side chains.. The protein operates within protein modification; lipoprotein biosynthesis (signal peptide cleavage). Functionally, this protein specifically catalyzes the removal of signal peptides from prolipoproteins. The sequence is that of Lipoprotein signal peptidase from Azoarcus sp. (strain BH72).